Here is a 391-residue protein sequence, read N- to C-terminus: Candidapepsin-1 (391 aa).

A signal peptide spans 1–18 (MFLKNIFIALAIALLVDA). A propeptide spans 19–50 (SPAKRSPGFVTLDFDVIKTPVNATGQEGKVKR) (activation peptide). The N-linked (GlcNAc...) asparagine glycan is linked to Asn-40. The Peptidase A1 domain occupies 64–377 (YAADITIGSN…DLDDDKISLA (314 aa)). Residue Asp-82 is part of the active site. Cysteines 97 and 109 form a disulfide. Asp-267 is an active-site residue. A disulfide bridge connects residues Cys-305 and Cys-343.

The protein belongs to the peptidase A1 family. In terms of processing, O-glycosylated.

Its subcellular location is the secreted. It catalyses the reaction Preferential cleavage at the carboxyl of hydrophobic amino acids, but fails to cleave 15-Leu-|-Tyr-16, 16-Tyr-|-Leu-17 and 24-Phe-|-Phe-25 of insulin B chain. Activates trypsinogen, and degrades keratin.. The protein is Candidapepsin-1 (SAP1) of Candida albicans (strain WO-1) (Yeast).